The primary structure comprises 539 residues: CTP synthase (539 aa).

The amidoligase domain stretch occupies residues 1-272 (MTLRSKMTKY…AQIILSHFKI (272 aa)). Position 19 (serine 19) interacts with CTP. UTP is bound at residue serine 19. ATP is bound at residue 20 to 25 (GLGKGV). Tyrosine 60 serves as a coordination point for L-glutamine. Aspartate 77 is an ATP binding site. 2 residues coordinate Mg(2+): aspartate 77 and glutamate 147. Residues 154 to 156 (DIE), 193 to 198 (KSKPTQ), and lysine 229 each bind CTP. UTP contacts are provided by residues 193 to 198 (KSKPTQ) and lysine 229. Residues 298-539 (KILMVGKYVE…SFLRVLIKNN (242 aa)) enclose the Glutamine amidotransferase type-1 domain. Glycine 360 is an L-glutamine binding site. The active-site Nucleophile; for glutamine hydrolysis is the cysteine 387. L-glutamine is bound by residues 388–391 (LGFQ), glutamate 410, and arginine 469. Residues histidine 514 and glutamate 516 contribute to the active site.

This sequence belongs to the CTP synthase family. As to quaternary structure, homotetramer.

It catalyses the reaction UTP + L-glutamine + ATP + H2O = CTP + L-glutamate + ADP + phosphate + 2 H(+). The enzyme catalyses L-glutamine + H2O = L-glutamate + NH4(+). The catalysed reaction is UTP + NH4(+) + ATP = CTP + ADP + phosphate + 2 H(+). Its pathway is pyrimidine metabolism; CTP biosynthesis via de novo pathway; CTP from UDP: step 2/2. With respect to regulation, allosterically activated by GTP, when glutamine is the substrate; GTP has no effect on the reaction when ammonia is the substrate. The allosteric effector GTP functions by stabilizing the protein conformation that binds the tetrahedral intermediate(s) formed during glutamine hydrolysis. Inhibited by the product CTP, via allosteric rather than competitive inhibition. In terms of biological role, catalyzes the ATP-dependent amination of UTP to CTP with either L-glutamine or ammonia as the source of nitrogen. Regulates intracellular CTP levels through interactions with the four ribonucleotide triphosphates. This is CTP synthase from Mycoplasmopsis pulmonis (strain UAB CTIP) (Mycoplasma pulmonis).